We begin with the raw amino-acid sequence, 227 residues long: PKHD-type hydroxylase GOX0559 (227 aa).

Residues 78–178 enclose the Fe2OG dioxygenase domain; it reads RVYPPLFNRY…RWASFFWSQS (101 aa). Fe cation is bound by residues histidine 96, aspartate 98, and histidine 159. Arginine 169 provides a ligand contact to 2-oxoglutarate.

Fe(2+) serves as cofactor. It depends on L-ascorbate as a cofactor.

The sequence is that of PKHD-type hydroxylase GOX0559 from Gluconobacter oxydans (strain 621H) (Gluconobacter suboxydans).